The chain runs to 447 residues: Phosphoglucosamine mutase (447 aa).

Ser104 acts as the Phosphoserine intermediate in catalysis. Positions 104, 243, 245, and 247 each coordinate Mg(2+). Ser104 carries the post-translational modification Phosphoserine.

It belongs to the phosphohexose mutase family. Mg(2+) serves as cofactor. In terms of processing, activated by phosphorylation.

The enzyme catalyses alpha-D-glucosamine 1-phosphate = D-glucosamine 6-phosphate. In terms of biological role, catalyzes the conversion of glucosamine-6-phosphate to glucosamine-1-phosphate. The polypeptide is Phosphoglucosamine mutase (Corynebacterium diphtheriae (strain ATCC 700971 / NCTC 13129 / Biotype gravis)).